The sequence spans 60 residues: Large ribosomal subunit protein bL32 (60 aa).

It belongs to the bacterial ribosomal protein bL32 family.

This Streptococcus mutans serotype c (strain ATCC 700610 / UA159) protein is Large ribosomal subunit protein bL32.